Reading from the N-terminus, the 416-residue chain is Protein P47 (416 aa).

It belongs to the TULIP P47 family. As to quaternary structure, part of a crude toxin extract that includes BoNTA2/NTNH, P47, OrfX2 and OrfX3; OrfX1 was not detected.

Functionally, part of a botulinum neurotoxin type A2 (BoNT) locus; may be part of a progenitor toxin complex required to protect BoNT during its passage through the host gastrointestinal tract. The sequence is that of Protein P47 from Clostridium botulinum (strain Kyoto / Type A2).